A 155-amino-acid polypeptide reads, in one-letter code: SsrA-binding protein (155 aa).

The protein belongs to the SmpB family.

The protein localises to the cytoplasm. Required for rescue of stalled ribosomes mediated by trans-translation. Binds to transfer-messenger RNA (tmRNA), required for stable association of tmRNA with ribosomes. tmRNA and SmpB together mimic tRNA shape, replacing the anticodon stem-loop with SmpB. tmRNA is encoded by the ssrA gene; the 2 termini fold to resemble tRNA(Ala) and it encodes a 'tag peptide', a short internal open reading frame. During trans-translation Ala-aminoacylated tmRNA acts like a tRNA, entering the A-site of stalled ribosomes, displacing the stalled mRNA. The ribosome then switches to translate the ORF on the tmRNA; the nascent peptide is terminated with the 'tag peptide' encoded by the tmRNA and targeted for degradation. The ribosome is freed to recommence translation, which seems to be the essential function of trans-translation. This chain is SsrA-binding protein, found in Clostridium acetobutylicum (strain ATCC 824 / DSM 792 / JCM 1419 / IAM 19013 / LMG 5710 / NBRC 13948 / NRRL B-527 / VKM B-1787 / 2291 / W).